Reading from the N-terminus, the 277-residue chain is Tumor necrosis factor-inducible gene 6 protein (277 aa).

The first 17 residues, 1-17 (MIILIYLFLLLWEDTQG), serve as a signal peptide directing secretion. Positions 36-129 (GVYHREARSG…SERWDAYCYN (94 aa)) constitute a Link domain. Cystine bridges form between C58–C127, C82–C103, and C135–C161. An N-linked (GlcNAc...) asparagine glycan is attached at N118. The region spanning 135 to 247 (CGGVFTDPKQ…GGFQIKYVAM (113 aa)) is the CUB domain. Ca(2+) contacts are provided by E183, D191, D232, S234, and V235. C188 and C210 form a disulfide bridge. N258 carries an N-linked (GlcNAc...) asparagine glycan.

As to quaternary structure, interacts (via Link domain) with inter-alpha-inhibitor (I-alpha-I) component bikunin. Interacts with ITIH2/HC2; this interaction is required for transesterification of the HC to hyaluronan. Interacts (via Link and CUB domains) with ITIH1. Chondroitin sulfate may be required for the stability of the complex. Interacts (via Link domain) with various C-X-C and C-C chemokines including PF4, CXCL8, CXCL11, CXCL12, CCL2, CCL7, CCL19, CCL21, and CCL27; this interaction interferes with chemokine binding to glycosaminoglycans. Interacts (primarily via Link domain) with BMP2; this interaction is inhibited by hyaluronan. Interacts (via both Link and CUB domains) with TNFSF11. Interacts (via CUB domain) with FN1 (via type III repeats 9-14); this interaction enhances fibronectin fibril assembly. TNFAIP6 may act as a bridging molecule between FN1 and THBS1. In terms of processing, N-glycosylated. In terms of tissue distribution, expressed in airway epithelium and submucosal gland (at protein level). Colocalizes with bikunin at the ciliary border. Present in bronchoalveolar lavage fluid (at protein level). Expressed in mesenchymal stem cells. Found in the synovial fluid of patients with rheumatoid arthritis.

It is found in the secreted. Major regulator of extracellular matrix organization during tissue remodeling. Catalyzes the transfer of a heavy chain (HC) from inter-alpha-inhibitor (I-alpha-I) complex to hyaluronan. Cleaves the ester bond between the C-terminus of the HC and GalNAc residue of the chondroitin sulfate chain in I-alpha-I complex followed by transesterification of the HC to hyaluronan. In the process, potentiates the antiprotease function of I-alpha-I complex through release of free bikunin. Acts as a catalyst in the formation of hyaluronan-HC oligomers and hyaluronan-rich matrix surrounding the cumulus cell-oocyte complex, a necessary step for oocyte fertilization. Assembles hyaluronan in pericellular matrices that serve as platforms for receptor clustering and signaling. Enables binding of hyaluronan deposited on the surface of macrophages to LYVE1 on lymphatic endothelium and facilitates macrophage extravasation. Alters hyaluronan binding to functionally latent CD44 on vascular endothelium, switching CD44 into an active state that supports leukocyte rolling. Modulates the interaction of chemokines with extracellular matrix components and proteoglycans on endothelial cell surface, likely preventing chemokine gradient formation. In a negative feedback mechanism, may limit excessive neutrophil recruitment at inflammatory sites by antagonizing the association of CXCL8 with glycosaminoglycans on vascular endothelium. Has a role in osteogenesis and bone remodeling. Inhibits BMP2-dependent differentiation of mesenchymal stem cell to osteoblasts. Protects against bone erosion during inflammation by inhibiting TNFSF11/RANKL-dependent osteoclast activation. This Homo sapiens (Human) protein is Tumor necrosis factor-inducible gene 6 protein (TNFAIP6).